Here is a 230-residue protein sequence, read N- to C-terminus: Acyl-protein thioesterase 1 (230 aa).

Catalysis depends on charge relay system residues serine 119, aspartate 174, and histidine 208. At lysine 224 the chain carries N6-acetyllysine.

This sequence belongs to the AB hydrolase superfamily. AB hydrolase 2 family. In terms of assembly, homodimer.

The protein localises to the cytoplasm. The protein resides in the cell membrane. It is found in the nucleus membrane. It localises to the endoplasmic reticulum. It carries out the reaction S-hexadecanoyl-L-cysteinyl-[protein] + H2O = L-cysteinyl-[protein] + hexadecanoate + H(+). The enzyme catalyses 1-hexadecanoyl-sn-glycero-3-phosphocholine + H2O = sn-glycerol 3-phosphocholine + hexadecanoate + H(+). It catalyses the reaction a 1-(9Z-octadecenoyl)-2-acyl-sn-glycero-3-phosphocholine + H2O = a 2-acyl-sn-glycero-3-phosphocholine + (9Z)-octadecenoate + H(+). Functionally, acts as an acyl-protein thioesterase. Hydrolyzes fatty acids from S-acylated cysteine residues in proteins such as trimeric G alpha proteins or HRAS. Acts as a palmitoyl thioesterase that catalyzes depalmitoylation of proteins, such as ADRB2, KCNMA1 and SQSTM1. Acts as a negative regulator of autophagy by mediating palmitoylation of SQSTM1, decreasing affinity between SQSTM1 and ATG8 proteins and recruitment of ubiquitinated cargo proteins to autophagosomes. Acts as a lysophospholipase and hydrolyzes lysophosphatidylcholine (lyso-PC). Also hydrolyzes lysophosphatidylethanolamine (lyso-PE), lysophosphatidylinositol (lyso-PI) and lysophosphatidylserine (lyso-PS). Has much higher thioesterase activity than lysophospholipase activity. Contributes to the production of lysophosphatidic acid (LPA) during blood coagulation by recognizing and cleaving plasma phospholipids to generate lysophospholipids which in turn act as substrates for ENPP2 to produce LPA. In Mus musculus (Mouse), this protein is Acyl-protein thioesterase 1 (Lypla1).